The primary structure comprises 442 residues: Cell division protein FtsZ (442 aa).

GTP-binding positions include 18-22 (GGGVN), 105-107 (GTG), Glu-136, Arg-140, and Asp-184. The segment covering 329–341 (AAPAAEPVQQQVP) has biased composition (low complexity). The tract at residues 329–442 (AAPAAEPVQQ…DDLDVPSFLQ (114 aa)) is disordered. 2 stretches are compositionally biased toward basic and acidic residues: residues 349–362 (PEKE…REEN) and 390–431 (NDRD…RDDR).

This sequence belongs to the FtsZ family. As to quaternary structure, homodimer. Polymerizes to form a dynamic ring structure in a strictly GTP-dependent manner. Interacts directly with several other division proteins.

It is found in the cytoplasm. Essential cell division protein that forms a contractile ring structure (Z ring) at the future cell division site. The regulation of the ring assembly controls the timing and the location of cell division. One of the functions of the FtsZ ring is to recruit other cell division proteins to the septum to produce a new cell wall between the dividing cells. Binds GTP and shows GTPase activity. In Corynebacterium glutamicum (strain ATCC 13032 / DSM 20300 / JCM 1318 / BCRC 11384 / CCUG 27702 / LMG 3730 / NBRC 12168 / NCIMB 10025 / NRRL B-2784 / 534), this protein is Cell division protein FtsZ.